We begin with the raw amino-acid sequence, 653 residues long: MEVAMVSAESSGCNSHMPYGYAAQARARERERLAHSRAAAAAAVAAATAAVEGSGGSGGGSHHHHQSRGACTSHDPQSSRGSRRRRRQRSEKKKAHYRQSSFPHCSDLMPSGSEEKILRELSEEEEDEEEEEEEEEEGRFYYSEDDHGDECSYTDLLPQDEGGGGYSSVRYSDCCERVVINVSGLRFETQMKTLAQFPETLLGDPEKRTQYFDPLRNEYFFDRNRPSFDAILYYYQSGGRLKRPVNVPFDIFTEEVKFYQLGEEALLKFREDEGFVREEEDRALPENEFKKQIWLLFEYPESSSPARGIAIVSVLVILISIVIFCLETLPEFRDDRDLVMALSAGGHGGLLNDTSAPHLENSGHTIFNDPFFIVETVCIVWFSFEFVVRCFACPSQALFFKNIMNIIDIVSILPYFITLGTDLAQQQGGGNGQQQQAMSFAILRIIRLVRVFRIFKLSRHSKGLQILGHTLRASMRELGLLIFFLFIGVILFSSAVYFAEADEPTTHFQSIPDAFWWAVVTMTTVGYGDMKPITVGGKIVGSLCAIAGVLTIALPVPVIVSNFNYFYHRETENEEQTQLTQNAVSCPYLPSNLLKKFRSSTSSSLGDKSEYLEMEEGVKESLCAKEEKCQGKGDDSETDKNNCSNAKAVETDV.

Over Met-1–Ser-304 the chain is Cytoplasmic. The disordered stretch occupies residues Gln-24–Gly-148. Positions Ser-36–Glu-52 are enriched in low complexity. The span at Gly-81–Tyr-97 shows a compositional bias: basic residues. Ser-90 is modified (phosphoserine; by PKA). Phosphoserine is present on Ser-122. Residues Ser-122–Glu-137 show a composition bias toward acidic residues. The chain crosses the membrane as a helical span at residues Pro-305–Leu-326. The Extracellular segment spans residues Glu-327–Pro-370. A glycan (N-linked (GlcNAc...) asparagine) is linked at Asn-352. Residues Phe-371–Ala-392 form a helical membrane-spanning segment. Over Cys-393–Ile-403 the chain is Cytoplasmic. A helical membrane pass occupies residues Met-404–Ala-424. Residues Gln-425–Ser-439 are Extracellular-facing. A helical; Voltage-sensor transmembrane segment spans residues Phe-440 to His-460. Over Ser-461–Met-475 the chain is Cytoplasmic. The segment at Lys-462–Met-475 is S4-S5 linker. The chain crosses the membrane as a helical span at residues Arg-476–Tyr-497. The Extracellular segment spans residues Phe-498–Ile-511. The helical intramembrane region spans Pro-512–Thr-523. The short motif at Thr-524 to Asp-529 is the Selectivity filter element. Residues Thr-524–Lys-531 lie within the membrane without spanning it. Residues Pro-532–Lys-538 lie on the Extracellular side of the membrane. Residues Ile-539–Tyr-567 form a helical membrane-spanning segment. The Cytoplasmic segment spans residues His-568 to Val-653. Residue Ser-599 is modified to Phosphoserine; by PKA. Residues Cys-629 to Lys-640 show a composition bias toward basic and acidic residues. A disordered region spans residues Cys-629 to Val-653. The PDZ-binding signature appears at Thr-651–Val-653.

The protein belongs to the potassium channel family. A (Shaker) (TC 1.A.1.2) subfamily. Kv1.4/KCNA4 sub-subfamily. As to quaternary structure, homotetramer and heterotetramer of potassium channel proteins. Interacts with KCNAB1 and KCNAB2. Interacts with DLG1, DLG2 and DLG4 via their PDZ domains. Interacts with SIGMAR1. Detected in a complex with KCNA1. Interacts with KCNA2. Part of a complex containing KCNA1, KCNAB1 and LGI1. Interacts (via cytoplasmic N-terminal domain) with KCNRG. As to expression, expressed in brain, and at lower levels in the testis, lung, kidney, colon and heart. Detected in heart ventricle.

The protein localises to the cell membrane. It is found in the cell projection. Its subcellular location is the axon. It catalyses the reaction K(+)(in) = K(+)(out). Its activity is regulated as follows. Inhibited by 4-aminopyridine (4-AP), but not by tetraethylammonium (TEA) and charybdotoxin (CTX). In terms of biological role, voltage-gated potassium channel that mediates transmembrane potassium transport in excitable membranes. Forms tetrameric potassium-selective channels through which potassium ions pass in accordance with their electrochemical gradient. The channel alternates between opened and closed conformations in response to the voltage difference across the membrane. Can form functional homotetrameric channels and heterotetrameric channels that contain variable proportions of KCNA1, KCNA2, KCNA4, KCNA5, and possibly other family members as well; channel properties depend on the type of alpha subunits that are part of the channel. Channel properties are modulated by cytoplasmic beta subunits that regulate the subcellular location of the alpha subunits and promote rapid inactivation. In vivo, membranes probably contain a mixture of heteromeric potassium channel complexes, making it difficult to assign currents observed in intact tissues to any particular potassium channel family member. Homotetrameric KCNA4 forms a potassium channel that opens in response to membrane depolarization, followed by rapid spontaneous channel closure. Likewise, a heterotetrameric channel formed by KCNA1 and KCNA4 shows rapid inactivation. This chain is Potassium voltage-gated channel subfamily A member 4 (KCNA4), found in Homo sapiens (Human).